The primary structure comprises 526 residues: Arylsulfatase G (526 aa).

Residues 1-16 (MGWLFLKVLLVGMVFS) form the signal peptide. 3 residues coordinate Ca(2+): aspartate 44, aspartate 45, and cysteine 84. Cysteine 84 acts as the Nucleophile in catalysis. Cysteine 84 carries the post-translational modification 3-oxoalanine (Cys). Asparagine 117 carries an N-linked (GlcNAc...) asparagine glycan. Lysine 137 provides a ligand contact to substrate. Residue histidine 139 is part of the active site. Residue serine 162 coordinates substrate. Asparagine 215 is a glycosylation site (N-linked (GlcNAc...) asparagine). Histidine 251 provides a ligand contact to substrate. Ca(2+)-binding residues include aspartate 302 and asparagine 303. Residues asparagine 356 and asparagine 497 are each glycosylated (N-linked (GlcNAc...) asparagine).

This sequence belongs to the sulfatase family. Ca(2+) is required as a cofactor. In terms of processing, N-glycosylated with both high mannose and complex type sugars. Post-translationally, the conversion to 3-oxoalanine (also known as C-formylglycine, FGly), of a serine or cysteine residue in prokaryotes and of a cysteine residue in eukaryotes, is critical for catalytic activity. 63-kDa precursor undergoes proteolytic processing in two steps, yielding two fragments in the first step (apparent molecular masses of 44 and 18 kDa). In the second step, the 44-kDa fragment is processed further to the 34- and 10-kDa chains. The 10-kDa chain is a cleavage product of the 44-kDa fragment but linked to the 18-kDa chain through a disulfide bridge.

The protein resides in the lysosome. It carries out the reaction an aryl sulfate + H2O = a phenol + sulfate + H(+). The enzyme catalyses Hydrolysis of the 3-sulfate groups of the N-sulfo-D-glucosamine 3-O-sulfate units of heparin.. In terms of biological role, displays arylsulfatase activity at acidic pH towards the artificial substrate p-nitrocatechol sulfate. Catalyzes the hydrolysis of the 3-sulfate groups of the N-sulfo-D-glucosamine 3-O-sulfate units of heparin. In Rattus norvegicus (Rat), this protein is Arylsulfatase G (Arsg).